Reading from the N-terminus, the 431-residue chain is Na(+)-translocating NADH-quinone reductase subunit F (431 aa).

The chain crosses the membrane as a helical span at residues 10–30 (IFVASAAFCSLGLILVAVILL). The 2Fe-2S ferredoxin-type domain occupies 41 to 133 (CKLKINNDDS…DLCLEVEERY (93 aa)). Positions 76, 82, 85, and 117 each coordinate [2Fe-2S] cluster. Residues 136 to 286 (ASSWEGTVVS…SGPYGESFMK (151 aa)) enclose the FAD-binding FR-type domain.

Belongs to the NqrF family. Composed of six subunits; NqrA, NqrB, NqrC, NqrD, NqrE and NqrF. [2Fe-2S] cluster serves as cofactor. Requires FAD as cofactor.

The protein localises to the cell inner membrane. It carries out the reaction a ubiquinone + n Na(+)(in) + NADH + H(+) = a ubiquinol + n Na(+)(out) + NAD(+). NQR complex catalyzes the reduction of ubiquinone-1 to ubiquinol by two successive reactions, coupled with the transport of Na(+) ions from the cytoplasm to the periplasm. The first step is catalyzed by NqrF, which accepts electrons from NADH and reduces ubiquinone-1 to ubisemiquinone by a one-electron transfer pathway. This is Na(+)-translocating NADH-quinone reductase subunit F from Chlamydia trachomatis serovar A (strain ATCC VR-571B / DSM 19440 / HAR-13).